We begin with the raw amino-acid sequence, 425 residues long: MAPPRCPAGLALLLLLLGACGFFQSYAVEVDVKDASNFTCLYAQWMMKFLIKYETNSSDYKNASLDLTSTVTHNGSICGSDTQAALLAVQFGDGHSWSINFTKNNETYRAEFITFTYNTNDTAVFPDARRQGPVTIVVKDAMHPIQLNNVFVCHHTTSLEAENVTQIFWNVTMQPFVQNGTISKKESRCYADTPTAAPTVLPTVANVTTASTTISPAPTTAPKPAENPVTGNYSLKTGNKTCLLATVGLQLNISQDKPLLINIDPKTTHADGTCGNTSATLKLNDGNRTLIDFTFIVNASASVQKFYLREVNVTLLNYQNGSVILSADNNNLSKWDASLGNSYMCRKEQTLEINENLQVHTFNLWVQPFLVKENKFSIAEECFADSDLNFLIPVAVGMALGFLIILVFISYIIGRRKSRTGYQSV.

An N-terminal signal peptide occupies residues 1-27 (MAPPRCPAGLALLLLLLGACGFFQSYA). The interval 28–192 (VEVDVKDASN…SKKESRCYAD (165 aa)) is first lumenal domain. Over 28–389 (VEVDVKDASN…EECFADSDLN (362 aa)) the chain is Lumenal. Asn-37, Asn-56, Asn-62, Asn-74, Asn-100, Asn-105, Asn-120, Asn-163, Asn-170, Asn-179, Asn-206, Asn-232, Asn-239, Asn-252, Asn-276, Asn-287, Asn-298, Asn-312, Asn-320, and Asn-331 each carry an N-linked (GlcNAc...) asparagine glycan. Cys-40 and Cys-78 form a disulfide bridge. Cys-153 and Cys-189 are oxidised to a cystine. Residues 193–238 (TPTAAPTVLPTVANVTTASTTISPAPTTAPKPAENPVTGNYSLKTG) form a hinge region. Residues 239–390 (NKTCLLATVG…ECFADSDLNF (152 aa)) are second lumenal domain. An intrachain disulfide couples Cys-242 to Cys-274. Cys-345 and Cys-382 are joined by a disulfide. A helical membrane pass occupies residues 390-414 (FLIPVAVGMALGFLIILVFISYIIG). At 415–425 (RRKSRTGYQSV) the chain is on the cytoplasmic side. Positions 416 to 419 (RKSR) are important for binding and subsequent lysosomal degradation of target proteins.

Belongs to the LAMP family. As to quaternary structure, monomer. Forms large homooligomers. Post-translationally, extensively N-glycosylated. Contains a minor proportion of O-linked glycans.

The protein resides in the lysosome membrane. It is found in the endosome membrane. Its subcellular location is the cell membrane. The protein localises to the cytoplasmic vesicle. It localises to the autophagosome membrane. Lysosomal membrane glycoprotein which plays an important role in lysosome biogenesis, lysosomal pH regulation and autophagy. Plays an important role in chaperone-mediated autophagy, a process that mediates lysosomal degradation of proteins in response to various stresses and as part of the normal turnover of proteins with a long biological half-live. In the chaperone-mediated autophagy, acts downstream of chaperones, such as HSPA8/HSC70, which recognize and bind substrate proteins and mediate their recruitment to lysosomes, where target proteins bind LAMP2. Plays a role in lysosomal protein degradation in response to starvation. Required for the fusion of autophagosomes with lysosomes during autophagy. This chain is Lysosome-associated membrane glycoprotein 2 (LAMP2), found in Gallus gallus (Chicken).